The following is a 295-amino-acid chain: Protein PAR32 (295 aa).

At Ala2 the chain carries N-acetylalanine. A phosphoserine mark is found at Ser36, Ser39, Ser47, Ser123, Ser138, Ser141, and Ser147. Polar residues predominate over residues 134–153; the sequence is SATRSHQSLHATTSSPNNNA. Disordered stretches follow at residues 134 to 156 and 217 to 295; these read SATRSHQSLHATTSSPNNNAPIV and TSKK…TMFN. Residues 217–227 are compositionally biased toward basic residues; it reads TSKKPKNKLKG. Ser246 carries the phosphoserine modification. Over residues 246–256 the composition is skewed to polar residues; the sequence is SPKSSRNTINH. Basic and acidic residues predominate over residues 265 to 274; sequence KFNLKDDNGK. The segment covering 275–284 has biased composition (basic residues); that stretch reads EKKKKKKKKS. A compositionally biased stretch (low complexity) spans 285 to 295; the sequence is GFFSSLKTMFN.

In terms of processing, hyperphosphorylated after treatment with rapamycin in a TAP42-dependent manner.

The protein resides in the cytoplasm. Involved in resistance to cisplatin. The sequence is that of Protein PAR32 (PAR32) from Saccharomyces cerevisiae (strain ATCC 204508 / S288c) (Baker's yeast).